Here is a 376-residue protein sequence, read N- to C-terminus: Growth/differentiation factor 8 (376 aa).

The first 24 residues, 1–24, serve as a signal peptide directing secretion; it reads MMQKLQMYVYIYLFMLIAAGPVDL. Positions 25 to 267 are excised as a propeptide; it reads NEGSEREENV…VTDTPKRSRR (243 aa). Asn72 carries an N-linked (GlcNAc...) asparagine glycan. 4 disulfide bridges follow: Cys273-Cys283, Cys282-Cys341, Cys310-Cys373, and Cys314-Cys375.

This sequence belongs to the TGF-beta family. In terms of assembly, homodimer; disulfide-linked. Interacts with WFIKKN2, leading to inhibit its activity. Interacts with FSTL3. Post-translationally, synthesized as large precursor molecule that undergoes proteolytic cleavage to generate an N-terminal propeptide and a disulfide linked C-terminal dimer, which is the biologically active molecule. The circulating form consists of a latent complex of the C-terminal dimer and other proteins, including its propeptide, which maintain the C-terminal dimer in a latent, inactive state. Ligand activation requires additional cleavage of the prodomain by a tolloid-like metalloproteinase. In terms of tissue distribution, expressed specifically in developing and adult skeletal muscle. Weak expression in adipose tissue.

It localises to the secreted. Its function is as follows. Acts specifically as a negative regulator of skeletal muscle growth. The chain is Growth/differentiation factor 8 (Mstn) from Mus musculus (Mouse).